A 425-amino-acid chain; its full sequence is UPF0229 protein YE2273 (425 aa).

The segment at 84–110 (TNDRIERPQGGGGGSGSGQGNAGQDGE) is disordered. The segment covering 92–108 (QGGGGGSGSGQGNAGQD) has biased composition (gly residues).

The protein belongs to the UPF0229 family.

The protein is UPF0229 protein YE2273 of Yersinia enterocolitica serotype O:8 / biotype 1B (strain NCTC 13174 / 8081).